The chain runs to 311 residues: Acetyl-coenzyme A carboxylase carboxyl transferase subunit alpha (311 aa).

One can recognise a CoA carboxyltransferase C-terminal domain in the interval Asn-36–Lys-286.

This sequence belongs to the AccA family. As to quaternary structure, acetyl-CoA carboxylase is a heterohexamer composed of biotin carboxyl carrier protein (AccB), biotin carboxylase (AccC) and two subunits each of ACCase subunit alpha (AccA) and ACCase subunit beta (AccD).

It is found in the cytoplasm. The catalysed reaction is N(6)-carboxybiotinyl-L-lysyl-[protein] + acetyl-CoA = N(6)-biotinyl-L-lysyl-[protein] + malonyl-CoA. It functions in the pathway lipid metabolism; malonyl-CoA biosynthesis; malonyl-CoA from acetyl-CoA: step 1/1. In terms of biological role, component of the acetyl coenzyme A carboxylase (ACC) complex. First, biotin carboxylase catalyzes the carboxylation of biotin on its carrier protein (BCCP) and then the CO(2) group is transferred by the carboxyltransferase to acetyl-CoA to form malonyl-CoA. In Campylobacter curvus (strain 525.92), this protein is Acetyl-coenzyme A carboxylase carboxyl transferase subunit alpha.